A 341-amino-acid polypeptide reads, in one-letter code: UDP-3-O-acylglucosamine N-acyltransferase (341 aa).

H241 functions as the Proton acceptor in the catalytic mechanism.

This sequence belongs to the transferase hexapeptide repeat family. LpxD subfamily. In terms of assembly, homotrimer.

It carries out the reaction a UDP-3-O-[(3R)-3-hydroxyacyl]-alpha-D-glucosamine + a (3R)-hydroxyacyl-[ACP] = a UDP-2-N,3-O-bis[(3R)-3-hydroxyacyl]-alpha-D-glucosamine + holo-[ACP] + H(+). Its pathway is bacterial outer membrane biogenesis; LPS lipid A biosynthesis. Functionally, catalyzes the N-acylation of UDP-3-O-acylglucosamine using 3-hydroxyacyl-ACP as the acyl donor. Is involved in the biosynthesis of lipid A, a phosphorylated glycolipid that anchors the lipopolysaccharide to the outer membrane of the cell. This chain is UDP-3-O-acylglucosamine N-acyltransferase, found in Histophilus somni (strain 129Pt) (Haemophilus somnus).